The primary structure comprises 301 residues: tRNA dimethylallyltransferase (301 aa).

9–16 (GPTASGKS) contributes to the ATP binding site. A substrate-binding site is contributed by 11–16 (TASGKS). Residues 34 to 37 (DSMQ) form an interaction with substrate tRNA region.

The protein belongs to the IPP transferase family. As to quaternary structure, monomer. The cofactor is Mg(2+).

The catalysed reaction is adenosine(37) in tRNA + dimethylallyl diphosphate = N(6)-dimethylallyladenosine(37) in tRNA + diphosphate. Catalyzes the transfer of a dimethylallyl group onto the adenine at position 37 in tRNAs that read codons beginning with uridine, leading to the formation of N6-(dimethylallyl)adenosine (i(6)A). This chain is tRNA dimethylallyltransferase, found in Corynebacterium efficiens (strain DSM 44549 / YS-314 / AJ 12310 / JCM 11189 / NBRC 100395).